We begin with the raw amino-acid sequence, 76 residues long: Translational regulator CsrA (76 aa).

This sequence belongs to the CsrA/RsmA family. As to quaternary structure, homodimer; the beta-strands of each monomer intercalate to form a hydrophobic core, while the alpha-helices form wings that extend away from the core.

It is found in the cytoplasm. Its function is as follows. A translational regulator that binds mRNA to regulate translation initiation and/or mRNA stability. Usually binds in the 5'-UTR at or near the Shine-Dalgarno sequence preventing ribosome-binding, thus repressing translation. Its main target seems to be the major flagellin gene, while its function is anatagonized by FliW. This Helicobacter pylori (strain P12) protein is Translational regulator CsrA.